We begin with the raw amino-acid sequence, 352 residues long: Photosystem II D2 protein (352 aa).

Residues 40–60 (CAFMALGGWLTGTTFVTSWYT) form a helical membrane-spanning segment. H117 contributes to the chlorophyll a binding site. The chain crosses the membrane as a helical span at residues 124 to 140 (GFMLRQFEIARLVGIRP). Pheophytin a is bound by residues Q129 and N142. The helical transmembrane segment at 152 to 165 (VFVSVFLMYPLGQS) threads the bilayer. Position 197 (H197) interacts with chlorophyll a. The helical transmembrane segment at 207-227 (GALLCAIHGATVENTLFEDSD) threads the bilayer. H214 and F261 together coordinate a plastoquinone. Position 214 (H214) interacts with Fe cation. A Fe cation-binding site is contributed by H268. Residues 278–294 (GLWMSSVGIVGLALNLR) form a helical membrane-spanning segment.

Belongs to the reaction center PufL/M/PsbA/D family. PSII is composed of 1 copy each of membrane proteins PsbA, PsbB, PsbC, PsbD, PsbE, PsbF, PsbH, PsbI, PsbJ, PsbK, PsbL, PsbM, PsbT, PsbX, PsbY, PsbZ, Psb30/Ycf12, peripheral proteins PsbO, CyanoQ (PsbQ), PsbU, PsbV and a large number of cofactors. It forms dimeric complexes. The D1/D2 heterodimer binds P680, chlorophylls that are the primary electron donor of PSII, and subsequent electron acceptors. It shares a non-heme iron and each subunit binds pheophytin, quinone, additional chlorophylls, carotenoids and lipids. There is also a Cl(-1) ion associated with D1 and D2, which is required for oxygen evolution. The PSII complex binds additional chlorophylls, carotenoids and specific lipids. is required as a cofactor.

It localises to the cellular thylakoid membrane. The catalysed reaction is 2 a plastoquinone + 4 hnu + 2 H2O = 2 a plastoquinol + O2. Its function is as follows. Photosystem II (PSII) is a light-driven water:plastoquinone oxidoreductase that uses light energy to abstract electrons from H(2)O, generating O(2) and a proton gradient subsequently used for ATP formation. It consists of a core antenna complex that captures photons, and an electron transfer chain that converts photonic excitation into a charge separation. The D1/D2 (PsbA/PsbD) reaction center heterodimer binds P680, the primary electron donor of PSII as well as several subsequent electron acceptors. D2 is needed for assembly of a stable PSII complex. The chain is Photosystem II D2 protein from Picosynechococcus sp. (strain ATCC 27264 / PCC 7002 / PR-6) (Agmenellum quadruplicatum).